Reading from the N-terminus, the 221-residue chain is Large ribosomal subunit protein uL1 (221 aa).

This sequence belongs to the universal ribosomal protein uL1 family. Part of the 50S ribosomal subunit.

Its function is as follows. Probably involved in E site tRNA release. Binds directly to 23S rRNA. Functionally, protein L1 is also a translational repressor protein, it controls the translation of its operon by binding to its mRNA. The protein is Large ribosomal subunit protein uL1 of Sulfolobus acidocaldarius (strain ATCC 33909 / DSM 639 / JCM 8929 / NBRC 15157 / NCIMB 11770).